The following is a 492-amino-acid chain: Peptidyl-prolyl cis-trans isomerase-like 4 (492 aa).

The PPIase cyclophilin-type domain maps to 1–161; it reads MAVLLETTLG…QDIRINHTVI (161 aa). The tract at residues 167 to 188 is disordered; sequence DDPPDLLIPDRSPEPTREQLDS. Residues 177–187 show a composition bias toward basic and acidic residues; the sequence is RSPEPTREQLD. Ser-178 carries the phosphoserine modification. Thr-182 bears the Phosphothreonine mark. Glycyl lysine isopeptide (Lys-Gly) (interchain with G-Cter in SUMO2) cross-links involve residues Lys-201, Lys-212, and Lys-218. Residues 240 to 318 enclose the RRM domain; the sequence is NVLFVCKLNP…RRIHVDFSQS (79 aa). Glycyl lysine isopeptide (Lys-Gly) (interchain with G-Cter in SUMO2) cross-links involve residues Lys-321 and Lys-362. Disordered regions lie at residues 368–406 and 423–492; these read DEQA…PIKN and EESC…SKYR. Residues 377 to 390 show a composition bias toward basic residues; it reads SHSHTSKKHKKKTH. Ser-393 is subject to Phosphoserine. Lys-405 participates in a covalent cross-link: Glycyl lysine isopeptide (Lys-Gly) (interchain with G-Cter in SUMO2). The segment covering 426 to 452 has biased composition (basic and acidic residues); it reads CWEKQKSEKRDRTQNRSRSRSRERDGH. Lys-460 participates in a covalent cross-link: Glycyl lysine isopeptide (Lys-Gly) (interchain with G-Cter in SUMO2). Phosphoserine is present on Ser-471. Residues 482–492 are compositionally biased toward basic and acidic residues; sequence KSKDKEKSKYR.

Belongs to the cyclophilin-type PPIase family. PPIL4 subfamily. Abundantly expressed in kidney but has a ubiquitously low expression pattern in other adult tissues.

Its subcellular location is the nucleus. It catalyses the reaction [protein]-peptidylproline (omega=180) = [protein]-peptidylproline (omega=0). Its function is as follows. PPIases accelerate the folding of proteins. It catalyzes the cis-trans isomerization of proline imidic peptide bonds in oligopeptides. The polypeptide is Peptidyl-prolyl cis-trans isomerase-like 4 (PPIL4) (Homo sapiens (Human)).